Consider the following 720-residue polypeptide: WSC domain-containing protein ARB_07870 (720 aa).

The first 24 residues, 1–24 (MLINLSAVWAAFALSGVLAPPTWP), serve as a signal peptide directing secretion. Asn-4, Asn-108, Asn-181, Asn-264, Asn-296, Asn-318, Asn-474, Asn-549, Asn-581, Asn-629, Asn-640, Asn-663, and Asn-701 each carry an N-linked (GlcNAc...) asparagine glycan. WSC domains follow at residues 524–615 (DYTF…YKDD) and 627–718 (GYNY…YTKL).

This sequence belongs to the WSCD family.

It is found in the secreted. In Arthroderma benhamiae (strain ATCC MYA-4681 / CBS 112371) (Trichophyton mentagrophytes), this protein is WSC domain-containing protein ARB_07870.